A 671-amino-acid chain; its full sequence is DNA ligase (671 aa).

NAD(+) is bound by residues 32-36 (DAEYD), 81-82 (SL), and E113. The active-site N6-AMP-lysine intermediate is K115. Residues R136, E173, K290, and K314 each coordinate NAD(+). C408, C411, C426, and C432 together coordinate Zn(2+). The region spanning 593-671 (EIDSPFAGKT…EAEMIRLLGA (79 aa)) is the BRCT domain.

The protein belongs to the NAD-dependent DNA ligase family. LigA subfamily. Requires Mg(2+) as cofactor. It depends on Mn(2+) as a cofactor.

It catalyses the reaction NAD(+) + (deoxyribonucleotide)n-3'-hydroxyl + 5'-phospho-(deoxyribonucleotide)m = (deoxyribonucleotide)n+m + AMP + beta-nicotinamide D-nucleotide.. DNA ligase that catalyzes the formation of phosphodiester linkages between 5'-phosphoryl and 3'-hydroxyl groups in double-stranded DNA using NAD as a coenzyme and as the energy source for the reaction. It is essential for DNA replication and repair of damaged DNA. The sequence is that of DNA ligase from Salmonella dublin (strain CT_02021853).